A 2566-amino-acid polypeptide reads, in one-letter code: Highly reducing polyketide synthase verA (2566 aa).

Residues 3-440 (PEPIAIIGTG…GTNAHAILES (438 aa)) form the Ketosynthase family 3 (KS3) domain. The tract at residues 35-61 (VASEPPSTRFDNRSFYDPDPSHPGTTN) is disordered. Residues 44-54 (FDNRSFYDPDP) are compositionally biased toward basic and acidic residues. Residues C176, H316, and H360 each act as for beta-ketoacyl synthase activity in the active site. The tract at residues 554–880 (IFTGQGAQWP…IGLSNRGASG (327 aa)) is malonyl-CoA:ACP transacylase (MAT) domain. Catalysis depends on S648, which acts as the For malonyltransferase activity. The tract at residues 950–1081 (HPLLGSLEAD…GKLLICWGNP (132 aa)) is N-terminal hotdog fold. The interval 950–1246 (HPLLGSLEAD…EGVHISPLGP (297 aa)) is dehydratase (DH) domain. In terms of domain architecture, PKS/mFAS DH spans 950–1250 (HPLLGSLEAD…ISPLGPPDRQ (301 aa)). Catalysis depends on H982, which acts as the Proton acceptor; for dehydratase activity. The segment at 1096–1250 (AGAVDIKDFY…ISPLGPPDRQ (155 aa)) is C-terminal hotdog fold. Residue D1156 is the Proton donor; for dehydratase activity of the active site. Residues 1386-1581 (DVLSRFYKED…TGFGGIDTIT (196 aa)) form a methyltransferase (CMet) domain region. Residues 2127-2294 (KTYLLVGMTG…RRARNIVGSI (168 aa)) are ketoreductase (KR) domain. Positions 2411 to 2489 (EAAEIVAAGL…ALTADSVSKL (79 aa)) constitute a Carrier domain. S2449 carries the post-translational modification O-(pantetheine 4'-phosphoryl)serine. The tract at residues 2505 to 2540 (KDVSGLTSPPEVPSDASRSSVSSGMDEIVTPESPSF) is disordered. Residues 2518-2527 (SDASRSSVSS) are compositionally biased toward low complexity.

The cofactor is pantetheine 4'-phosphate.

The protein operates within secondary metabolite biosynthesis; terpenoid biosynthesis. It functions in the pathway mycotoxin biosynthesis. In terms of biological role, highly reducing polyketide synthase (HR-PKS); part of the gene cluster that mediates the biosynthesis of the neurotoxin verrucosidin, a methylated alpha-pyrone polyketide that inhibits oxidative phosphorylation in mitochondria and thereby causes neurological diseases. The carbon backbone of verrucosidin is synthesized by the HR-PKS verA, and further modified by the other verrucodidin cluster enzymes. The protein is Highly reducing polyketide synthase verA of Penicillium polonicum.